Here is a 476-residue protein sequence, read N- to C-terminus: Adenosylhomocysteinase (476 aa).

Residues Thr-62, Asp-141, and Glu-201 each contribute to the substrate site. 202-204 (TTT) contributes to the NAD(+) binding site. Substrate is bound by residues Lys-231 and Asp-235. NAD(+) contacts are provided by residues Asn-236, 265–270 (GYGDVG), Glu-288, Asn-323, 344–346 (IGH), and Asn-389.

This sequence belongs to the adenosylhomocysteinase family. The cofactor is NAD(+).

It localises to the cytoplasm. It catalyses the reaction S-adenosyl-L-homocysteine + H2O = L-homocysteine + adenosine. It participates in amino-acid biosynthesis; L-homocysteine biosynthesis; L-homocysteine from S-adenosyl-L-homocysteine: step 1/1. In terms of biological role, may play a key role in the regulation of the intracellular concentration of adenosylhomocysteine. The sequence is that of Adenosylhomocysteinase from Myxococcus xanthus (strain DK1622).